Consider the following 30-residue polypeptide: Cyclotide hyen-F (30 aa).

The segment at residues 1 to 30 is a cross-link (cyclopeptide (Gly-Asn)); it reads GLPCGESCVYIPCISTVLGCSCSNKVCYRN. Cystine bridges form between Cys-4–Cys-20, Cys-8–Cys-22, and Cys-13–Cys-27.

This is a cyclic peptide. Detected in seeds (at protein level).

Functionally, probably participates in a plant defense mechanism. In Pigea enneasperma (Spade flower), this protein is Cyclotide hyen-F.